Consider the following 409-residue polypeptide: Arginine deiminase (409 aa).

The active-site Amidino-cysteine intermediate is the cysteine 397.

It belongs to the arginine deiminase family.

The protein resides in the cytoplasm. It catalyses the reaction L-arginine + H2O = L-citrulline + NH4(+). The protein operates within amino-acid degradation; L-arginine degradation via ADI pathway; carbamoyl phosphate from L-arginine: step 1/2. This is Arginine deiminase (arcA) from Metamycoplasma hominis (Mycoplasma hominis).